A 260-amino-acid chain; its full sequence is NH(3)-dependent NAD(+) synthetase (260 aa).

31–38 (GLSGGLDS) is an ATP binding site. Asp37 is a Mg(2+) binding site. Arg112 contributes to the deamido-NAD(+) binding site. ATP is bound at residue Thr132. Glu137 contacts Mg(2+). Residues Lys161 and Ser183 each coordinate ATP.

The protein belongs to the NAD synthetase family. As to quaternary structure, homodimer.

The catalysed reaction is deamido-NAD(+) + NH4(+) + ATP = AMP + diphosphate + NAD(+) + H(+). It participates in cofactor biosynthesis; NAD(+) biosynthesis; NAD(+) from deamido-NAD(+) (ammonia route): step 1/1. In terms of biological role, catalyzes the ATP-dependent amidation of deamido-NAD to form NAD. Uses ammonia as a nitrogen source. This is NH(3)-dependent NAD(+) synthetase from Helicobacter pylori (strain P12).